Consider the following 258-residue polypeptide: NAD-dependent protein deacylase (258 aa).

Residues 3–258 (ERQLEKSIEH…LPALMRGLSA (256 aa)) form the Deacetylase sirtuin-type domain. 28-48 (GAGMSADSGLETYRDDKTGLW) contributes to the NAD(+) binding site. The substrate site is built by Tyr-73 and Arg-76. 109–112 (QNID) contributes to the NAD(+) binding site. His-127 functions as the Proton acceptor in the catalytic mechanism. Cys-135, Cys-138, Cys-161, and Cys-164 together coordinate Zn(2+). NAD(+) is bound by residues 201 to 203 (GTS) and Ala-245.

It belongs to the sirtuin family. Class III subfamily. The cofactor is Zn(2+).

Its subcellular location is the cytoplasm. It catalyses the reaction N(6)-acetyl-L-lysyl-[protein] + NAD(+) + H2O = 2''-O-acetyl-ADP-D-ribose + nicotinamide + L-lysyl-[protein]. It carries out the reaction N(6)-succinyl-L-lysyl-[protein] + NAD(+) + H2O = 2''-O-succinyl-ADP-D-ribose + nicotinamide + L-lysyl-[protein]. In terms of biological role, NAD-dependent lysine deacetylase and desuccinylase that specifically removes acetyl and succinyl groups on target proteins. Modulates the activities of several proteins which are inactive in their acylated form. This chain is NAD-dependent protein deacylase, found in Corynebacterium glutamicum (strain ATCC 13032 / DSM 20300 / JCM 1318 / BCRC 11384 / CCUG 27702 / LMG 3730 / NBRC 12168 / NCIMB 10025 / NRRL B-2784 / 534).